Reading from the N-terminus, the 264-residue chain is Cyclin-P1-1 (264 aa).

Positions 1-25 (MDAAAAAGGEMSRQKATASAPPPPE) are disordered.

This sequence belongs to the cyclin family. Cyclin U/P subfamily.

This is Cyclin-P1-1 (CYCP1-1) from Oryza sativa subsp. japonica (Rice).